Here is a 137-residue protein sequence, read N- to C-terminus: Large ribosomal subunit protein bL12 (137 aa).

The protein belongs to the bacterial ribosomal protein bL12 family. Homodimer. Part of the ribosomal stalk of the 50S ribosomal subunit. Forms a multimeric L10(L12)X complex, where L10 forms an elongated spine to which 2 to 4 L12 dimers bind in a sequential fashion. Binds GTP-bound translation factors.

Functionally, forms part of the ribosomal stalk which helps the ribosome interact with GTP-bound translation factors. Is thus essential for accurate translation. The protein is Large ribosomal subunit protein bL12 of Gloeobacter violaceus (strain ATCC 29082 / PCC 7421).